A 64-amino-acid chain; its full sequence is Large ribosomal subunit protein bL33 (64 aa).

The protein belongs to the bacterial ribosomal protein bL33 family.

The chain is Large ribosomal subunit protein bL33 from Synechococcus sp. (strain JA-2-3B'a(2-13)) (Cyanobacteria bacterium Yellowstone B-Prime).